A 472-amino-acid polypeptide reads, in one-letter code: NALCN channel auxiliary factor 2 (472 aa).

Residues 47-67 form a helical membrane-spanning segment; the sequence is LASLLFFTVLLADHLWLCAGA. The disordered stretch occupies residues 77 to 114; it reads AMRPPWGAGRERQPVPPRAVLPLPPPPPGEPSAPPGTC. A compositionally biased stretch (pro residues) spans 90-110; sequence PVPPRAVLPLPPPPPGEPSAP. N-linked (GlcNAc...) asparagine glycans are attached at residues asparagine 120 and asparagine 193. A helical membrane pass occupies residues 433–453; the sequence is LCVLVLMLLHTVVSFSSNQGG.

It belongs to the NALF family.

The protein resides in the membrane. Functionally, probable component of the NALCN channel complex, a channel that regulates the resting membrane potential and controls neuronal excitability. In Homo sapiens (Human), this protein is NALCN channel auxiliary factor 2.